Here is a 186-residue protein sequence, read N- to C-terminus: Crossover junction endodeoxyribonuclease RuvC (186 aa).

Active-site residues include Asp-7, Glu-73, and Asp-145. 3 residues coordinate Mg(2+): Asp-7, Glu-73, and Asp-145.

It belongs to the RuvC family. In terms of assembly, homodimer which binds Holliday junction (HJ) DNA. The HJ becomes 2-fold symmetrical on binding to RuvC with unstacked arms; it has a different conformation from HJ DNA in complex with RuvA. In the full resolvosome a probable DNA-RuvA(4)-RuvB(12)-RuvC(2) complex forms which resolves the HJ. It depends on Mg(2+) as a cofactor.

It is found in the cytoplasm. The enzyme catalyses Endonucleolytic cleavage at a junction such as a reciprocal single-stranded crossover between two homologous DNA duplexes (Holliday junction).. The RuvA-RuvB-RuvC complex processes Holliday junction (HJ) DNA during genetic recombination and DNA repair. Endonuclease that resolves HJ intermediates. Cleaves cruciform DNA by making single-stranded nicks across the HJ at symmetrical positions within the homologous arms, yielding a 5'-phosphate and a 3'-hydroxyl group; requires a central core of homology in the junction. The consensus cleavage sequence is 5'-(A/T)TT(C/G)-3'. Cleavage occurs on the 3'-side of the TT dinucleotide at the point of strand exchange. HJ branch migration catalyzed by RuvA-RuvB allows RuvC to scan DNA until it finds its consensus sequence, where it cleaves and resolves the cruciform DNA. In Acidovorax sp. (strain JS42), this protein is Crossover junction endodeoxyribonuclease RuvC.